Consider the following 1734-residue polypeptide: MGQTVTTPLSLTLEHWGDVQRIASNQSVGVKKRRWVTFCSAEWPTFGVGWPQDGTFNLDIILQVKSKVFSPGPHGHPDQVPYIVTWEAIAYEPPPWVKPFVSPKLSLSPTAPILPSGPSTQPPPRSALYPAFTPSIKPRPSKPQVLSDDGGPLIDLLTEDPPPYGEQGPSSPDGDGDREEATSTSEIPAPSPMVSRLRGKRDPPAADSTTSRAFPLRLGGNGQLQYWPFSSSDLYNWKNNNPSFSEDPGKLTALIESVLTTHQPTWDDCQQLLGTLLTGEEKQRVLLEARKAVRGNDGRPTQLPNEVNSAFPLERPDWDYTTPEGRNHLVLYRQLLLAGLQNAGRSPTNLAKVKGITQGPNESPSAFLERLKEAYRRYTPYDPEDPGQETNVSMSFIWQSAPAIGRKLERLEDLKSKTLGDLVREAEKIFNKRETPEEREERIRRETEEKEERRRAGDEQREKERDRRRQREMSKLLATVVTGQRQDRQGGERRRPQLDKDQCAYCKEKGHWAKDCPKKPRGPRGPRPQTSLLTLDDQGGQGQEPPPEPRITLTVGGQPVTFLVDTGAQHSVLTQNPGPLSDRSAWVQGATGGKRYRWTTDRKVHLATGKVTHSFLHVPDCPYPLLGRDLLTKLKAQIHFEGSGAQVVGPKGQPLQVLTLGIEDEYRLHETSTEPDVSLGSTWLSDFPQAWAETGGMGLAVRQAPLIIPLKATSTPVSIQQYPMSHEARLGIKPHIQRLLDQGILVPCQSPWNTPLLPVKKPGTNDYRPVQDLREVNKRVEDIHPTVPNPYNLLSGLPPSHQWYTVLDLKDAFFCLRLHPTSQPLFAFEWRDPGMGISGQLTWTRLPQGFKNSPTLFDEALHRDLADFRIQHPDLILLQYVDDILLAATSELDCQQGTRALLQTLGDLGYRASAKKAQICQKQVKYLGYLLREGQRWLTEARKETVMGQPVPKTPRQLREFLGTAGFCRLWIPGFAEMAAPLYPLTKTGTLFSWGPDQQKAYQEIKQALLTAPALGLPDLTKPFELFVDEKQGYAKGVLTQKLGPWRRPVAYLSKKLDPVAAGWPPCLRMVAAIAVLTKDAGKLTMGQPLVILAPHAVEALVKQPPDRWLSNARMTHYQAMLLDTDRVQFGPVVALNPATLLPLPEEGAPHDCLEILAETHGTRPDLTDQPIPDADHTWYTDGSSFLQEGQRKAGAAVTTETEVIWAGALPAGTSAQRAELIALTQALKMAEGKRLNVYTDSRYAFATAHIHGEIYRRRGLLTSEGREIKNKSEILALLKALFLPKRLSIIHCLGHQKGDSAEARGNRLADQAAREAAIKTPPDTSTLLIEDSTPYTPAYFHYTETDLKKLRDLGATYNQSKGYWVFQGKPVMPDQFVFELLDSLHRLTHLGYQKMKALLDRGESPYYMLNRDKTLQYVADSCTVCAQVNASKAKIGAGVRVRGHRPGTHWEIDFTEVKPGLYGYKYLLVFVDTFSGWVEAFPTKRETARVVSKKLLEEIFPRFGMPQVLGSDNGPAFTSQVSQSVADLLGIDWKLHCAYRPQSSGQVERINRTIKETLTKLTLAAGTRDWVLLLPLALYRARNTPGPHGLTPYEILYGAPPPLVNFHDPDMSELTNSPSLQAHLQALQTVQREIWKPLAEAYRDRLDQPVIPHPFRIGDSVWVRRHQTKNLEPRWKGPYTVLLTTPTALKVDGISAWIHAAHVKAATTPPIKPSWRVQRSQNPLKIRLTRGAP.

G2 is lipidated: N-myristoyl glycine; by host. The short motif at 109-112 (PTAP) is the PTAP/PSAP motif element. Residues 112-217 (PILPSGPSTQ…STTSRAFPLR (106 aa)) form a disordered region. Positions 128-132 (LYPAF) match the LYPX(n)L motif motif. The PPXY motif motif lies at 161-164 (PPPY). S191 is subject to Phosphoserine; by host. Residues 344–392 (GRSPTNLAKVKGITQGPNESPSAFLERLKEAYRRYTPYDPEDPGQETNV) are interaction with host PIAS4. Residues 429–434 (IFNKRE) are interaction with host UBE2I. 2 stretches are compositionally biased toward basic and acidic residues: residues 433-474 (RETP…REMS) and 485-498 (RQDR…RPQL). Disordered regions lie at residues 433–498 (RETP…RPQL) and 512–551 (WAKD…EPRI). The CCHC-type zinc finger occupies 501–518 (DQCAYCKEKGHWAKDCPK). A Peptidase A2 domain is found at 560–630 (VTFLVDTGAQ…CPYPLLGRDL (71 aa)). The active-site Protease; shared with dimeric partner is D565. The region spanning 740–931 (LDQGILVPCQ…KQVKYLGYLL (192 aa)) is the Reverse transcriptase domain. Residues D808, D882, D883, D1182, E1220, D1241, and D1311 each coordinate Mg(2+). In terms of domain architecture, RNase H type-1 spans 1173 to 1319 (PDADHTWYTD…ADQAAREAAI (147 aa)). An HHCC-type zinc finger spans residues 1386-1426 (HRLTHLGYQKMKALLDRGESPYYMLNRDKTLQYVADSCTVC). Residues 1443-1601 (RGHRPGTHWE…TPYEILYGAP (159 aa)) enclose the Integrase catalytic domain. Residues D1454 and D1513 each contribute to the Mg(2+) site.

In terms of assembly, homohexamer; further associates as homomultimer. The virus core is composed of a lattice formed from hexagonal rings, each containing six capsid monomers. Interacts with mouse UBE2I and mouse PIAS4. As to quaternary structure, interacts (via PPXY motif) with host NEDD4. Interacts (via PSAP motif) with host TSG101. Interacts (via LYPX(n)L motif) with host PDCD6IP. The reverse transcriptase is a monomer (Potential). Interacts (via RNase domains) with host release factor ETF1; this interaction is essential for translational readthrough of amber codon between viral gag and pol genes, as well as for viral replication. In terms of assembly, homodimer. Mg(2+) serves as cofactor. Post-translationally, ubiquitinated by ITCH. Gag can recruit the ubiquitin ligase Itch in an L domain-independent manner to facilitate virus release via a mechanism that involves Gag ubiquitination. In terms of processing, specific enzymatic cleavages by the viral protease yield mature proteins. The protease is released by autocatalytic cleavage. The polyprotein is cleaved during and after budding, this process is termed maturation. Sumoylated; which is required for virus replication. Post-translationally, phosphorylated on serine residues.

It localises to the virion. Its subcellular location is the host cell membrane. The protein localises to the host late endosome membrane. It is found in the host endosome. The protein resides in the host multivesicular body. It localises to the host cytoplasm. The enzyme catalyses DNA(n) + a 2'-deoxyribonucleoside 5'-triphosphate = DNA(n+1) + diphosphate. It catalyses the reaction Endonucleolytic cleavage to 5'-phosphomonoester.. Most efficiently inhibited by Amprenavir, which is able to block Gag-Pol processing in infected cells. Its function is as follows. Plays a role in budding and is processed by the viral protease during virion maturation outside the cell. During budding, it recruits, in a PPXY-dependent or independent manner, Nedd4-like ubiquitin ligases that conjugate ubiquitin molecules to Gag-Pol, or to Gag-Pol binding host factors. Interaction with HECT ubiquitin ligases probably links the viral protein to the host ESCRT pathway and facilitates release. In terms of biological role, targets Gag and gag-pol polyproteins to the plasma membrane via a multipartite membrane binding signal, that includes its myristoylated N-terminus. Also mediates nuclear localization of the pre-integration complex. Functionally, constituent of the pre-integration complex (PIC) which tethers the latter to mitotic chromosomes. This allows the integration of the viral genome into the host DNA. Forms the spherical core of the virion that encapsulates the genomic RNA-nucleocapsid complex. Its function is as follows. Involved in the packaging and encapsidation of two copies of the genome. Binds with high affinity to conserved UCUG elements within the packaging signal, located near the 5'-end of the genome. This binding is dependent on genome dimerization. Acts as a nucleic acid chaperone which is involved in rearrangement of nucleic acid secondary structures during gRNA retrotranscription. In terms of biological role, the aspartyl protease mediates proteolytic cleavages of Gag and Gag-Pol polyproteins during or shortly after the release of the virion from the plasma membrane. Cleavages take place as an ordered, step-wise cascade to yield mature proteins. This process is called maturation. Displays maximal activity during the budding process just prior to particle release from the cell (Potential). Cleaves the translation initiation factor eIF4G leading to the inhibition of host cap-dependent translation. Functionally, RT is a multifunctional enzyme that converts the viral dimeric RNA genome into dsDNA in the cytoplasm, shortly after virus entry into the cell. This enzyme displays a DNA polymerase activity that can copy either DNA or RNA templates, and a ribonuclease H (RNase H) activity that cleaves the RNA strand of RNA-DNA heteroduplexes in a partially processive 3' to 5' endonucleasic mode. Conversion of viral genomic RNA into dsDNA requires many steps. A tRNA binds to the primer-binding site (PBS) situated at the 5' end of the viral RNA. RT uses the 3' end of the tRNA primer to perform a short round of RNA-dependent minus-strand DNA synthesis. The reading proceeds through the U5 region and ends after the repeated (R) region which is present at both ends of viral RNA. The portion of the RNA-DNA heteroduplex is digested by the RNase H, resulting in a ssDNA product attached to the tRNA primer. This ssDNA/tRNA hybridizes with the identical R region situated at the 3' end of viral RNA. This template exchange, known as minus-strand DNA strong stop transfer, can be either intra- or intermolecular. RT uses the 3' end of this newly synthesized short ssDNA to perform the RNA-dependent minus-strand DNA synthesis of the whole template. RNase H digests the RNA template except for a polypurine tract (PPT) situated at the 5' end of the genome. It is not clear if both polymerase and RNase H activities are simultaneous. RNase H probably can proceed both in a polymerase-dependent (RNA cut into small fragments by the same RT performing DNA synthesis) and a polymerase-independent mode (cleavage of remaining RNA fragments by free RTs). Secondly, RT performs DNA-directed plus-strand DNA synthesis using the PPT that has not been removed by RNase H as primers. PPT and tRNA primers are then removed by RNase H. The 3' and 5' ssDNA PBS regions hybridize to form a circular dsDNA intermediate. Strand displacement synthesis by RT to the PBS and PPT ends produces a blunt ended, linear dsDNA copy of the viral genome that includes long terminal repeats (LTRs) at both ends. Catalyzes viral DNA integration into the host chromosome, by performing a series of DNA cutting and joining reactions. This enzyme activity takes place after virion entry into a cell and reverse transcription of the RNA genome in dsDNA. The first step in the integration process is 3' processing. This step requires a complex comprising the viral genome, matrix protein and integrase. This complex is called the pre-integration complex (PIC). The integrase protein removes 2 nucleotides from each 3' end of the viral DNA, leaving recessed CA OH's at the 3' ends. In the second step that requires cell division, the PIC enters cell nucleus. In the third step, termed strand transfer, the integrase protein joins the previously processed 3' ends to the 5' ends of strands of target cellular DNA at the site of integration. The last step is viral DNA integration into host chromosome. The chain is Gag-pol polyprotein (gag-pol) from Mus musculus (Mouse).